Here is a 2280-residue protein sequence, read N- to C-terminus: Protein Ycf2 (2280 aa).

ATP is bound at residue 1634–1641 (GSIGTGRS).

Belongs to the Ycf2 family.

The protein resides in the plastid. It is found in the chloroplast stroma. Probable ATPase of unknown function. Its presence in a non-photosynthetic plant (Epifagus virginiana) and experiments in tobacco indicate that it has an essential function which is probably not related to photosynthesis. This chain is Protein Ycf2, found in Eucalyptus globulus subsp. globulus (Tasmanian blue gum).